The following is a 712-amino-acid chain: Lactoperoxidase (712 aa).

An N-terminal signal peptide occupies residues 1–26 (MRVLLHLPALLASLILLQAAASTTRA). Positions 27–80 (QTTRTSAISDTVSQAKVQVNKAFLDSRTRLKTAMSSETPTSRQLSEYLKHAKGR) are excised as a propeptide. Residue N106 is glycosylated (N-linked (GlcNAc...) asparagine). Residues C132 and C145 are joined by a disulfide bond. N212 carries an N-linked (GlcNAc...) asparagine glycan. D225 is a binding site for heme b. The active-site Proton acceptor is H226. D227 is a Ca(2+) binding site. Cystine bridges form between C246–C256 and C250–C274. Positions 301, 303, 305, and 307 each coordinate Ca(2+). S315 bears the Phosphoserine mark. N-linked (GlcNAc...) asparagine glycosylation is found at N322 and N358. The cysteines at positions 354 and 365 are disulfide-linked. 2 residues coordinate heme b: E375 and H468. Y482 carries the post-translational modification 3'-nitrotyrosine. Intrachain disulfides connect C573–C630 and C671–C696.

The protein belongs to the peroxidase family. XPO subfamily. Requires Ca(2+) as cofactor. It depends on heme b as a cofactor. Mammary gland, milk and salivary gland. Found in bronchial submucosal glands.

The protein localises to the secreted. The protein resides in the cytoplasm. It catalyses the reaction 2 a phenolic donor + H2O2 = 2 a phenolic radical donor + 2 H2O. The catalysed reaction is thiocyanate + H2O2 + H(+) = hypothiocyanous acid + H2O. It carries out the reaction iodide + H2O2 = hypoiodite + H2O. Heme-containing oxidoreductase which catalyzes the conversion of thiocyanate (SCN(-)) into antimicrobial agent hypothiocyanous acid (OSCN(-)) in the presence of hydrogen peroxide (H2O2). Also involved in the conversion of iodide (I(-)) into hypoiodite (IO(-)) in the presence of H2O2. Responsible for the inactivation of a wide range of micro-organisms and hence, important component of defense mechanism. Shows antibacterial properties against Pseudomonas aeruginosa. The lactoperoxidase-SCN(-)-H2O2 system shows antibacterial properties against Burkholderia cepacia and Haemophilus influenzae in vitro. Present in mammary and salivary gland secretions and may contribute to airway host defense against infection. May contribute to maintaining an appropriate H2O2 cellular level, therefore protecting cells from H2O2-caused injuries and inflammation. This chain is Lactoperoxidase, found in Homo sapiens (Human).